A 102-amino-acid polypeptide reads, in one-letter code: Large ribosomal subunit protein bL21 (102 aa).

This sequence belongs to the bacterial ribosomal protein bL21 family. Part of the 50S ribosomal subunit. Contacts protein L20.

Functionally, this protein binds to 23S rRNA in the presence of protein L20. The sequence is that of Large ribosomal subunit protein bL21 from Geotalea uraniireducens (strain Rf4) (Geobacter uraniireducens).